A 227-amino-acid polypeptide reads, in one-letter code: Small ribosomal subunit protein uS3 (227 aa).

One can recognise a KH type-2 domain in the interval 39-107 (VRQLLQKRLK…PVHITIEEVR (69 aa)).

Belongs to the universal ribosomal protein uS3 family. In terms of assembly, part of the 30S ribosomal subunit. Forms a tight complex with proteins S10 and S14.

Its function is as follows. Binds the lower part of the 30S subunit head. Binds mRNA in the 70S ribosome, positioning it for translation. This is Small ribosomal subunit protein uS3 from Coxiella burnetii (strain CbuK_Q154) (Coxiella burnetii (strain Q154)).